We begin with the raw amino-acid sequence, 203 residues long: Undecaprenyl phosphate transporter A (203 aa).

5 consecutive transmembrane segments (helical) span residues 16 to 36 (AIFI…EIIL), 48 to 68 (LSIL…LLIL), 108 to 128 (YGVW…LITI), 137 to 157 (VVTF…GLIL), and 173 to 193 (LHTY…YFAI).

The protein belongs to the DedA family.

Its subcellular location is the cell membrane. Functionally, flippase that catalyzes the transport of undecaprenyl phosphate (UndP) across the cytoplasmic membrane, from the external side to the cytoplasmic side. Is involved in UndP recycling during peptidoglycan synthesis. The chain is Undecaprenyl phosphate transporter A from Staphylococcus aureus (strain NCTC 8325 / PS 47).